The following is a 284-amino-acid chain: Steroidogenic acute regulatory protein, mitochondrial (284 aa).

A mitochondrion-targeting transit peptide spans 1 to 62; it reads MFLATFKLCA…RRSSLLGSQL (62 aa). Residues Ser56 and Ser194 each carry the phosphoserine; by PKA modification. Residues 66–279 enclose the START domain; that stretch reads LYSDQELSYI…LRKRLEASPA (214 aa).

As to quaternary structure, may interact with TSPO. In terms of tissue distribution, expressed within glia and neurons in discrete regions of the brain.

The protein resides in the mitochondrion. The catalysed reaction is cholesterol(in) = cholesterol(out). It participates in steroid metabolism; cholesterol metabolism. Functionally, plays a key role in steroid hormone synthesis by enhancing the metabolism of cholesterol into pregnenolone. Transporter that binds to and transport cholesterol through the intermembrane space of the mitochondrion. The chain is Steroidogenic acute regulatory protein, mitochondrial (Star) from Mus musculus (Mouse).